Consider the following 234-residue polypeptide: LexA repressor (234 aa).

Residues 1–29 form a disordered region; that stretch reads MSDAANPEGHKRSLPGRPPGIRADSSGLT. Positions 52 to 72 form a DNA-binding region, H-T-H motif; sequence MREIGQAVGLSSTSSVAHQLM. Residues 90–109 form a disordered region; sequence YEVRGSDQAASVQPTDTAGK. Catalysis depends on for autocatalytic cleavage activity residues S158 and K195.

Belongs to the peptidase S24 family. In terms of assembly, homodimer.

The catalysed reaction is Hydrolysis of Ala-|-Gly bond in repressor LexA.. Functionally, represses a number of genes involved in the response to DNA damage (SOS response), including recA and lexA. In the presence of single-stranded DNA, RecA interacts with LexA causing an autocatalytic cleavage which disrupts the DNA-binding part of LexA, leading to derepression of the SOS regulon and eventually DNA repair. In Streptomyces coelicolor (strain ATCC BAA-471 / A3(2) / M145), this protein is LexA repressor.